The chain runs to 307 residues: Small ribosomal subunit biogenesis GTPase RsgA (307 aa).

The region spanning 80 to 237 is the CP-type G domain; the sequence is KVDLRQAIVS…IVDTPGIKEF (158 aa). Residues 129-132 and 180-188 contribute to the GTP site; these read NKID and GQSGVGKSS. Zn(2+)-binding residues include Cys261, Cys266, His268, and Cys274.

This sequence belongs to the TRAFAC class YlqF/YawG GTPase family. RsgA subfamily. In terms of assembly, monomer. Associates with 30S ribosomal subunit, binds 16S rRNA. Zn(2+) serves as cofactor.

It localises to the cytoplasm. In terms of biological role, one of several proteins that assist in the late maturation steps of the functional core of the 30S ribosomal subunit. Helps release RbfA from mature subunits. May play a role in the assembly of ribosomal proteins into the subunit. Circularly permuted GTPase that catalyzes slow GTP hydrolysis, GTPase activity is stimulated by the 30S ribosomal subunit. The chain is Small ribosomal subunit biogenesis GTPase RsgA from Borrelia garinii subsp. bavariensis (strain ATCC BAA-2496 / DSM 23469 / PBi) (Borreliella bavariensis).